Reading from the N-terminus, the 230-residue chain is Ribose-5-phosphate isomerase A (230 aa).

Substrate contacts are provided by residues 32-35 (TGST), 85-88 (DGAD), and 98-101 (KGGG). The Proton acceptor role is filled by Glu-107. Lys-125 serves as a coordination point for substrate.

The protein belongs to the ribose 5-phosphate isomerase family. As to quaternary structure, homodimer.

The enzyme catalyses aldehydo-D-ribose 5-phosphate = D-ribulose 5-phosphate. It participates in carbohydrate degradation; pentose phosphate pathway; D-ribose 5-phosphate from D-ribulose 5-phosphate (non-oxidative stage): step 1/1. Its function is as follows. Catalyzes the reversible conversion of ribose-5-phosphate to ribulose 5-phosphate. The sequence is that of Ribose-5-phosphate isomerase A from Burkholderia vietnamiensis (strain G4 / LMG 22486) (Burkholderia cepacia (strain R1808)).